A 434-amino-acid polypeptide reads, in one-letter code: 3-phosphoshikimate 1-carboxyvinyltransferase (434 aa).

Positions 22, 23, and 27 each coordinate 3-phosphoshikimate. Lys22 contacts phosphoenolpyruvate. Phosphoenolpyruvate is bound by residues Gly93 and Arg121. Residues Ser168, Ser169, Gln170, Ser199, Asp320, and Lys347 each coordinate 3-phosphoshikimate. Position 170 (Gln170) interacts with phosphoenolpyruvate. Asp320 functions as the Proton acceptor in the catalytic mechanism. Phosphoenolpyruvate-binding residues include Arg351, Arg395, and Lys420.

This sequence belongs to the EPSP synthase family. Monomer.

It localises to the cytoplasm. The enzyme catalyses 3-phosphoshikimate + phosphoenolpyruvate = 5-O-(1-carboxyvinyl)-3-phosphoshikimate + phosphate. It participates in metabolic intermediate biosynthesis; chorismate biosynthesis; chorismate from D-erythrose 4-phosphate and phosphoenolpyruvate: step 6/7. Its function is as follows. Catalyzes the transfer of the enolpyruvyl moiety of phosphoenolpyruvate (PEP) to the 5-hydroxyl of shikimate-3-phosphate (S3P) to produce enolpyruvyl shikimate-3-phosphate and inorganic phosphate. The sequence is that of 3-phosphoshikimate 1-carboxyvinyltransferase from Cupriavidus taiwanensis (strain DSM 17343 / BCRC 17206 / CCUG 44338 / CIP 107171 / LMG 19424 / R1) (Ralstonia taiwanensis (strain LMG 19424)).